A 1069-amino-acid polypeptide reads, in one-letter code: Protocadherin-8 (1069 aa).

A signal peptide spans 1–29 (MSPVKRWGSPCLFPLQLFSLCWVLSVAQS). Cadherin domains lie at 30–135 (KTVR…APRF), 136–245 (PRAQ…SPAF), 247–354 (QGAV…APDI), 393–497 (QETG…APLF), 498–609 (TKPV…SPVL), and 615–721 (ANGS…VPAS). Residues 30 to 747 (KTVRYSTFEE…SGPSLQWDTP (718 aa)) lie on the Extracellular side of the membrane. An N-linked (GlcNAc...) asparagine glycan is attached at Asn616. The interval 719-738 (PASAGSPEHFRPPGSRLAPS) is disordered. A helical membrane pass occupies residues 748–768 (LIVIIVLAGSCTLLLAAIIAI). Residues 769 to 1069 (ATTCNRRKKE…SPKKGTNENV (301 aa)) lie on the Cytoplasmic side of the membrane. 3 disordered regions span residues 777–859 (KEVR…TGES), 905–927 (REAE…DSDS), and 1031–1069 (LSPP…NENV). 2 stretches are compositionally biased toward basic and acidic residues: residues 780–790 (RKGGALREERP) and 905–920 (REAE…KGDS). Ser1052 bears the Phosphoserine mark.

In terms of assembly, the N-terminal extracellular domain forms homophilic interactions; these interactions activate p38 MAPK via TAOK2 and trigger endocytosis. Interacts with CDH2; this interaction may lead to CDH2 cointernalization. Interacts with CDH11. Interacts with TAOK2. Enriched in brain relative to peripheral tissues, with low expression in the testis. Expressed in hippocampal neurons (at protein level).

It localises to the cell membrane. It is found in the cell projection. The protein localises to the dendrite. Its subcellular location is the presynaptic cell membrane. The protein resides in the postsynaptic cell membrane. In terms of biological role, calcium-dependent cell-adhesion protein. May play a role in activity-induced synaptic reorganization underlying long term memory. Could be involved in CDH2 internalization through TAOK2/p38 MAPK pathway. In hippocampal neurons, may play a role in the down-regulation of dendritic spines, maybe through its action on CDH2 endocytosis. The polypeptide is Protocadherin-8 (Pcdh8) (Rattus norvegicus (Rat)).